The sequence spans 150 residues: Large ribosomal subunit protein bL9 (150 aa).

The protein belongs to the bacterial ribosomal protein bL9 family.

Binds to the 23S rRNA. This chain is Large ribosomal subunit protein bL9, found in Shewanella halifaxensis (strain HAW-EB4).